A 171-amino-acid polypeptide reads, in one-letter code: Adenine phosphoribosyltransferase (171 aa).

The protein belongs to the purine/pyrimidine phosphoribosyltransferase family. Homodimer.

The protein resides in the cytoplasm. It carries out the reaction AMP + diphosphate = 5-phospho-alpha-D-ribose 1-diphosphate + adenine. Its pathway is purine metabolism; AMP biosynthesis via salvage pathway; AMP from adenine: step 1/1. In terms of biological role, catalyzes a salvage reaction resulting in the formation of AMP, that is energically less costly than de novo synthesis. The polypeptide is Adenine phosphoribosyltransferase (Geobacter metallireducens (strain ATCC 53774 / DSM 7210 / GS-15)).